The primary structure comprises 991 residues: Glutamate receptor 1 (991 aa).

The signal sequence occupies residues 1–27 (MHSRLKFLAYLHFICASSIFWPEFSSA). Topologically, residues 28-611 (QQQQQTVSLT…VFSFLNPLSQ (584 aa)) are extracellular. 4 N-linked (GlcNAc...) asparagine glycosylation sites follow: Asn-67, Asn-195, Asn-208, and Asn-281. 2 disordered regions span residues 300–321 (DSRK…GPNS) and 354–379 (FRSN…NESS). Polar residues predominate over residues 308 to 318 (SGQSQSQNAGG). A compositionally biased stretch (low complexity) spans 365-379 (GGSSSSSATGTNESS). 5 N-linked (GlcNAc...) asparagine glycosylation sites follow: Asn-376, Asn-385, Asn-426, Asn-437, and Asn-477. A helical transmembrane segment spans residues 612–632 (EIWISVILSYVGVSFVLYFVT). Residues 633 to 710 (RFPPYEWRIV…PSIAGRIAAA (78 aa)) are Cytoplasmic-facing. The helical transmembrane segment at 711–731 (VWWFFTIILISSYTANLAAFL) threads the bilayer. Residues 732 to 895 (TVERMVAPIK…STPNELSLSN (164 aa)) lie on the Extracellular side of the membrane. A helical transmembrane segment spans residues 896–916 (VAGIYYILIGGLLLAVIVAIM). At 917–991 (EFFCRNKTPQ…ASNVRYQYSM (75 aa)) the chain is on the cytoplasmic side.

The protein belongs to the glutamate-gated ion channel (TC 1.A.10.1) family. As to quaternary structure, homooligomer. In terms of tissue distribution, central nervous system.

Its subcellular location is the cell membrane. The protein resides in the postsynaptic cell membrane. Receptor for glutamate. L-glutamate acts as an excitatory neurotransmitter at many synapses in the central nervous system. The postsynaptic actions of Glu are mediated by a variety of receptors that are named according to their selective agonists. Forms ligand-gated ion channels which are activated by kainate. The polypeptide is Glutamate receptor 1 (GluRIA) (Drosophila melanogaster (Fruit fly)).